A 295-amino-acid chain; its full sequence is Histamine N-methyltransferase (295 aa).

Residue Ala2 is modified to Blocked amino end (Ala). Glu28 serves as a coordination point for substrate. Gly60, Glu89, Gln94, Ser120, and Ile143 together coordinate S-adenosyl-L-methionine. Asn284 serves as a coordination point for substrate.

Belongs to the class I-like SAM-binding methyltransferase superfamily. HNMT family. Monomer.

It localises to the cytoplasm. The catalysed reaction is histamine + S-adenosyl-L-methionine = N(tau)-methylhistamine + S-adenosyl-L-homocysteine + H(+). Functionally, inactivates histamine by N-methylation. Plays an important role in degrading histamine and in regulating the airway response to histamine. This chain is Histamine N-methyltransferase (Hnmt), found in Rattus norvegicus (Rat).